The sequence spans 84 residues: Insulin-like peptide 05 (84 aa).

The first 22 residues, M1 to G22, serve as a signal peptide directing secretion. Positions F23–R37 are excised as a propeptide. 3 disulfide bridges follow: C43-C48, C44-C73, and C57-C61.

Belongs to the insulin family.

It localises to the secreted. Functionally, insulin decreases blood glucose concentration. May have evolved to activate insulin receptors (INSR) in vertebrates. Molecular docking studies reveals unique interaction with the human insulin receptor. In vivo, insulin-like peptide injection reduces blood glucose levels in two models of zebrafish diabetes (streptozotocin- and glucose-induced). Also shorter swimming distance of zebrafish larvae, an effect which is not observed with human insulin. The polypeptide is Insulin-like peptide 05 (Exaiptasia diaphana (Tropical sea anemone)).